The primary structure comprises 329 residues: Deoxyhypusine hydroxylase (329 aa).

4 HEAT-like PBS-type repeats span residues 65-91 (LKHE…VLED), 99-124 (RHEA…MRDD), 232-258 (FRHE…ALSN), and 265-292 (VRHE…FLND). Positions 67, 68, 100, 101, 234, 235, 267, and 268 each coordinate Fe cation.

This sequence belongs to the deoxyhypusine hydroxylase family. The cofactor is Fe(2+).

The protein localises to the cytoplasm. It is found in the nucleus. The catalysed reaction is [eIF5A protein]-deoxyhypusine + AH2 + O2 = [eIF5A protein]-hypusine + A + H2O. It participates in protein modification; eIF5A hypusination. Its function is as follows. Catalyzes the hydroxylation of the N(6)-(4-aminobutyl)-L-lysine intermediate to form hypusine, an essential post-translational modification only found in mature eIF-5A factor. In Phaeosphaeria nodorum (strain SN15 / ATCC MYA-4574 / FGSC 10173) (Glume blotch fungus), this protein is Deoxyhypusine hydroxylase.